Reading from the N-terminus, the 483-residue chain is MIQVLLVTICLAVFPYQGSSIILESGNVNDYEVVYPRKVTALPKRAVQQKYEDAMQYELKVNGEPVVLHLEKNKGLFSEDYSETHYSPDGREITTYPSVEDHCYYHGRIHNDADSTASISACDGLKGYFKLQGETYLIEPLKLSDSEAHAVYKYENIEKEDEAPKMCGVTQNWESDESIKKASQLYLTPEQQRFPQRYIELAIVVDHGMYKKYNHDSDKIKVRVHQMVNHINEMYRPLNIAITLSLLQIWSNKDLITVKSASNVTLNLFGNWRETVLLKRRSHDCAHLLTDINFTGNIIGLAYKQGMCNPKLSVGLVQDYSSNVFVVAVIMTHELGHNLGMEHDEEKNGKKCNCKTCIMSPAISDPPAQLFSDCSKNDYHTFLTNRNPQCILNAPLRTDTVSTPVSGNEFLEAGEECDCGSPSNPCCDAATCKLRPGAQCADGLCCDQCRFKKKRTICRIARGDFPDDRCTGLSNDCPRWNDL.

Positions 1 to 20 are cleaved as a signal peptide; sequence MIQVLLVTICLAVFPYQGSS. A propeptide spanning residues 21–190 is cleaved from the precursor; it reads IILESGNVND…KASQLYLTPE (170 aa). The Peptidase M12B domain maps to 197 to 395; sequence RYIELAIVVD…RNPQCILNAP (199 aa). Position 200 (glutamate 200) interacts with Ca(2+). Asparagine 263 carries N-linked (GlcNAc...) asparagine glycosylation. Position 284 (aspartate 284) interacts with Ca(2+). Asparagine 293 carries N-linked (GlcNAc...) asparagine glycosylation. 3 disulfides stabilise this stretch: cysteine 308–cysteine 390, cysteine 352–cysteine 374, and cysteine 354–cysteine 357. Zn(2+) is bound at residue histidine 333. Glutamate 334 is an active-site residue. The Zn(2+) site is built by histidine 337 and histidine 343. Cysteine 390 and asparagine 393 together coordinate Ca(2+). The propeptide occupies 396-413; the sequence is LRTDTVSTPVSGNEFLEA. The 81-residue stretch at 403–483 folds into the Disintegrin domain; sequence TPVSGNEFLE…SNDCPRWNDL (81 aa). 6 disulfides stabilise this stretch: cysteine 417–cysteine 432, cysteine 419–cysteine 427, cysteine 426–cysteine 449, cysteine 440–cysteine 446, cysteine 445–cysteine 470, and cysteine 458–cysteine 477. The short motif at 462-464 is the Cell attachment site element; it reads RGD.

This sequence belongs to the venom metalloproteinase (M12B) family. P-II subfamily. P-IIa sub-subfamily. In terms of assembly, monomeric (disintegrin). Zn(2+) serves as cofactor. Expressed by the venom gland.

The protein resides in the secreted. Its function is as follows. Impairs hemostasis in the envenomed animal. Inhibits platelet aggregation induced by ADP, thrombin, platelet-activating factor and collagen. Acts by inhibiting fibrinogen interaction with platelet receptors GPIIb/GPIIIa (ITGA2B/ITGB3). This is Zinc metalloproteinase/disintegrin from Protobothrops flavoviridis (Habu).